Reading from the N-terminus, the 98-residue chain is MSLVYMNIMTAFTVSLTGLLMYRSHLMSSLLCLEGMMLALFVMATLTILNSHFTLASMMPIILLVFAACEAALGLSLLVMVSNTYGTDYVQNLNLLQC.

3 consecutive transmembrane segments (helical) span residues Met-1–Met-21, Ser-29–Leu-49, and Ile-61–Val-81.

The protein belongs to the complex I subunit 4L family. In terms of assembly, core subunit of respiratory chain NADH dehydrogenase (Complex I) which is composed of 45 different subunits.

It localises to the mitochondrion inner membrane. It carries out the reaction a ubiquinone + NADH + 5 H(+)(in) = a ubiquinol + NAD(+) + 4 H(+)(out). Functionally, core subunit of the mitochondrial membrane respiratory chain NADH dehydrogenase (Complex I) which catalyzes electron transfer from NADH through the respiratory chain, using ubiquinone as an electron acceptor. Part of the enzyme membrane arm which is embedded in the lipid bilayer and involved in proton translocation. The chain is NADH-ubiquinone oxidoreductase chain 4L (MT-ND4L) from Elaphodus cephalophus (Tufted deer).